The following is a 436-amino-acid chain: uncharacterized protein (436 aa).

The next 12 membrane-spanning stretches (helical) occupy residues 38 to 58 (ILIF…TVGA), 70 to 90 (VAGI…LLIG), 102 to 122 (LAGG…AALI), 125 to 145 (VALL…NLQV), 160 to 180 (TAAS…PNLV), 197 to 217 (GPFI…LIFL), 254 to 274 (IMVG…IMTM), 291 to 311 (LVIG…GLLV), 319 to 339 (MAIA…IAPA), 342 to 362 (LSLL…GLLT), 383 to 403 (FDVL…MVVA), and 409 to 429 (ILSI…IWYF).

This sequence belongs to the major facilitator superfamily.

Its subcellular location is the cell membrane. This is an uncharacterized protein from Bacillus subtilis (strain 168).